The sequence spans 406 residues: Tyrosine--tRNA ligase (406 aa).

Y35 contributes to the L-tyrosine binding site. Residues 40–49 (ATSASLHIGH) carry the 'HIGH' region motif. The L-tyrosine site is built by Y167 and Q171. A 'KMSKS' region motif is present at residues 227–231 (KMGKS). K230 contributes to the ATP binding site. The S4 RNA-binding domain maps to 341 to 405 (ILLVDLMVLA…IGKKKILRIV (65 aa)).

The protein belongs to the class-I aminoacyl-tRNA synthetase family. TyrS type 1 subfamily. Homodimer.

The protein resides in the cytoplasm. It catalyses the reaction tRNA(Tyr) + L-tyrosine + ATP = L-tyrosyl-tRNA(Tyr) + AMP + diphosphate + H(+). Functionally, catalyzes the attachment of tyrosine to tRNA(Tyr) in a two-step reaction: tyrosine is first activated by ATP to form Tyr-AMP and then transferred to the acceptor end of tRNA(Tyr). The protein is Tyrosine--tRNA ligase of Borrelia duttonii (strain Ly).